A 255-amino-acid chain; its full sequence is MRRHSTRKTVARVAVVALAVGVLAGCNTFKRLSEIGDGPAMSGVDNPTLRPDYRPVSMPMPAPMVAEPNPSSLWVPGARSFFKDQRAGEVGDLLTVIVDISNEKATFANNLSRTRGNKEGANLTSFLGFEGTLADVLPDGVDPASLTSFGSDSKHTGNGSMARSETVSMRLAAVVLQILPNGNFVIAGKQEVRVNGELRELTVTGVIRPEDIRSDNTIFWHQIAEARISYGGRGTVTDMVEPRYGQQVYDILFPF.

The signal sequence occupies residues 1–25 (MRRHSTRKTVARVAVVALAVGVLAG). Cys26 carries the N-palmitoyl cysteine lipid modification. A lipid anchor (S-diacylglycerol cysteine) is attached at Cys26.

The protein belongs to the FlgH family. As to quaternary structure, the basal body constitutes a major portion of the flagellar organelle and consists of four rings (L,P,S, and M) mounted on a central rod.

The protein resides in the cell outer membrane. The protein localises to the bacterial flagellum basal body. Assembles around the rod to form the L-ring and probably protects the motor/basal body from shearing forces during rotation. The polypeptide is Flagellar L-ring protein (Rhodospirillum rubrum (strain ATCC 11170 / ATH 1.1.1 / DSM 467 / LMG 4362 / NCIMB 8255 / S1)).